A 249-amino-acid polypeptide reads, in one-letter code: 2,3-bisphosphoglycerate-dependent phosphoglycerate mutase (249 aa).

Residues 11-18, 24-25, Arg-63, 90-93, Lys-101, and 117-118 contribute to the substrate site; these read RHGESEWN, TG, ERHY, and RR. The active-site Tele-phosphohistidine intermediate is the His-12. Glu-90 (proton donor/acceptor) is an active-site residue. The segment at 119–138 is disordered; the sequence is SYDTPPPPIERGSTYSQDAD. Residue 184 to 185 coordinates substrate; that stretch reads GN.

Belongs to the phosphoglycerate mutase family. BPG-dependent PGAM subfamily.

It catalyses the reaction (2R)-2-phosphoglycerate = (2R)-3-phosphoglycerate. It functions in the pathway carbohydrate degradation; glycolysis; pyruvate from D-glyceraldehyde 3-phosphate: step 3/5. Its function is as follows. Catalyzes the interconversion of 2-phosphoglycerate and 3-phosphoglycerate. The sequence is that of 2,3-bisphosphoglycerate-dependent phosphoglycerate mutase from Mycolicibacterium paratuberculosis (strain ATCC BAA-968 / K-10) (Mycobacterium paratuberculosis).